Here is a 103-residue protein sequence, read N- to C-terminus: Cell division protein FtsB (103 aa).

Over 1 to 3 the chain is Cytoplasmic; sequence MGK. The helical transmembrane segment at 4-21 threads the bilayer; it reads LTLLLLAILVWLQYSLWF. The Periplasmic portion of the chain corresponds to 22 to 103; sequence GKNGIHDYTR…RAQSAGQNNR (82 aa). A coiled-coil region spans residues 31–71; the sequence is RVNNDVAAQQATNAKLKARNDQLFAEIDDLNGGQEALEERA.

Belongs to the FtsB family. Part of a complex composed of FtsB, FtsL and FtsQ.

It is found in the cell inner membrane. In terms of biological role, essential cell division protein. May link together the upstream cell division proteins, which are predominantly cytoplasmic, with the downstream cell division proteins, which are predominantly periplasmic. The protein is Cell division protein FtsB of Escherichia coli O81 (strain ED1a).